The sequence spans 491 residues: Protein nucleotidyltransferase YdiU (491 aa).

ATP is bound by residues Gly94, Gly96, Arg97, Lys117, Asp129, Gly130, Arg180, and Arg187. The active-site Proton acceptor is Asp256. Residues Asn257 and Asp266 each coordinate Mg(2+). Asp266 serves as a coordination point for ATP.

The protein belongs to the SELO family. It depends on Mg(2+) as a cofactor. The cofactor is Mn(2+).

The catalysed reaction is L-seryl-[protein] + ATP = 3-O-(5'-adenylyl)-L-seryl-[protein] + diphosphate. The enzyme catalyses L-threonyl-[protein] + ATP = 3-O-(5'-adenylyl)-L-threonyl-[protein] + diphosphate. It catalyses the reaction L-tyrosyl-[protein] + ATP = O-(5'-adenylyl)-L-tyrosyl-[protein] + diphosphate. It carries out the reaction L-histidyl-[protein] + UTP = N(tele)-(5'-uridylyl)-L-histidyl-[protein] + diphosphate. The catalysed reaction is L-seryl-[protein] + UTP = O-(5'-uridylyl)-L-seryl-[protein] + diphosphate. The enzyme catalyses L-tyrosyl-[protein] + UTP = O-(5'-uridylyl)-L-tyrosyl-[protein] + diphosphate. Functionally, nucleotidyltransferase involved in the post-translational modification of proteins. It can catalyze the addition of adenosine monophosphate (AMP) or uridine monophosphate (UMP) to a protein, resulting in modifications known as AMPylation and UMPylation. The protein is Protein nucleotidyltransferase YdiU of Bacillus cytotoxicus (strain DSM 22905 / CIP 110041 / 391-98 / NVH 391-98).